Consider the following 240-residue polypeptide: Eukaryotic translation initiation factor 3 subunit K (240 aa).

In terms of domain architecture, PCI spans 41-221 (YDKDIVLTIL…TIKTRNIDEK (181 aa)).

This sequence belongs to the eIF-3 subunit K family. As to quaternary structure, component of the eukaryotic translation initiation factor 3 (eIF-3) complex.

Its subcellular location is the cytoplasm. Component of the eukaryotic translation initiation factor 3 (eIF-3) complex, which is involved in protein synthesis of a specialized repertoire of mRNAs and, together with other initiation factors, stimulates binding of mRNA and methionyl-tRNAi to the 40S ribosome. The eIF-3 complex specifically targets and initiates translation of a subset of mRNAs involved in cell proliferation. This is Eukaryotic translation initiation factor 3 subunit K from Caenorhabditis briggsae.